The following is a 260-amino-acid chain: Cytochrome c oxidase subunit 3 (260 aa).

Topologically, residues 1-15 are mitochondrial matrix; that stretch reads MTHQTHAYHMVNPSP. The chain crosses the membrane as a helical span at residues 16-34; the sequence is WPLTGALSALLMTSGLAMW. At 35–40 the chain is on the mitochondrial intermembrane side; sequence FHFNST. Residues 41 to 66 traverse the membrane as a helical segment; sequence ALLMIGLTTNMLTMYQWWRDIIREST. The Mitochondrial matrix segment spans residues 67–72; it reads FQGHHT. Residues 73–105 traverse the membrane as a helical segment; it reads PAVQKGLRYGMILFIISEVLFFTGFFWAFYHSS. The Mitochondrial intermembrane segment spans residues 106–128; sequence LAPTPELGGCWPPTGIHPLNPLE. A helical membrane pass occupies residues 129 to 152; it reads VPLLNTSVLLASGVSITWAHHSLM. Residues 153 to 155 lie on the Mitochondrial matrix side of the membrane; that stretch reads EGD. Residues 156-183 form a helical membrane-spanning segment; the sequence is RNHMLQALFITITLGVYFTLLQASEYYE. The Mitochondrial intermembrane segment spans residues 184–190; the sequence is APFTISD. A helical transmembrane segment spans residues 191-223; that stretch reads GVYGSTFFVATGFHGLHVIIGSTFLIVCFFRQL. Topologically, residues 224-232 are mitochondrial matrix; it reads KFHFTSNHH. The helical transmembrane segment at 233-256 threads the bilayer; that stretch reads FGFEAAAWYWHFVDVVWLFLYVSI. Topologically, residues 257-260 are mitochondrial intermembrane; the sequence is YWWG.

This sequence belongs to the cytochrome c oxidase subunit 3 family. As to quaternary structure, component of the cytochrome c oxidase (complex IV, CIV), a multisubunit enzyme composed of 14 subunits. The complex is composed of a catalytic core of 3 subunits MT-CO1, MT-CO2 and MT-CO3, encoded in the mitochondrial DNA, and 11 supernumerary subunits COX4I, COX5A, COX5B, COX6A, COX6B, COX6C, COX7A, COX7B, COX7C, COX8 and NDUFA4, which are encoded in the nuclear genome. The complex exists as a monomer or a dimer and forms supercomplexes (SCs) in the inner mitochondrial membrane with NADH-ubiquinone oxidoreductase (complex I, CI) and ubiquinol-cytochrome c oxidoreductase (cytochrome b-c1 complex, complex III, CIII), resulting in different assemblies (supercomplex SCI(1)III(2)IV(1) and megacomplex MCI(2)III(2)IV(2)).

The protein resides in the mitochondrion inner membrane. The enzyme catalyses 4 Fe(II)-[cytochrome c] + O2 + 8 H(+)(in) = 4 Fe(III)-[cytochrome c] + 2 H2O + 4 H(+)(out). Component of the cytochrome c oxidase, the last enzyme in the mitochondrial electron transport chain which drives oxidative phosphorylation. The respiratory chain contains 3 multisubunit complexes succinate dehydrogenase (complex II, CII), ubiquinol-cytochrome c oxidoreductase (cytochrome b-c1 complex, complex III, CIII) and cytochrome c oxidase (complex IV, CIV), that cooperate to transfer electrons derived from NADH and succinate to molecular oxygen, creating an electrochemical gradient over the inner membrane that drives transmembrane transport and the ATP synthase. Cytochrome c oxidase is the component of the respiratory chain that catalyzes the reduction of oxygen to water. Electrons originating from reduced cytochrome c in the intermembrane space (IMS) are transferred via the dinuclear copper A center (CU(A)) of subunit 2 and heme A of subunit 1 to the active site in subunit 1, a binuclear center (BNC) formed by heme A3 and copper B (CU(B)). The BNC reduces molecular oxygen to 2 water molecules using 4 electrons from cytochrome c in the IMS and 4 protons from the mitochondrial matrix. The chain is Cytochrome c oxidase subunit 3 (MT-CO3) from Bos mutus grunniens (Wild yak).